The following is a 401-amino-acid chain: Alkane 1-monooxygenase (401 aa).

Residues 1-20 (MLEKHRVLDSAPEYVDKKKY) lie on the Cytoplasmic side of the membrane. The helical transmembrane segment at 21-39 (LWILSTLWPATPMIGIWLA) threads the bilayer. Topologically, residues 40 to 41 (NE) are periplasmic. The chain crosses the membrane as a helical span at residues 42 to 62 (TGWGIFYGLVLLVWYGALPLL). The Cytoplasmic segment spans residues 63–88 (DAMFGEDFNNPPEEVVPKLEKERYYR). A helical transmembrane segment spans residues 89–111 (VLTYLTVPMHYAALIVSAWWVGT). The Periplasmic segment spans residues 112 to 113 (QP). Residues 114–134 (MSWLEIGALALSLGIVNGLAL) form a helical membrane-spanning segment. Residues 135–228 (NTGHELGHKK…QSVWSFDNEI (94 aa)) lie on the Cytoplasmic side of the membrane. The Fe cation site is built by His138, His142, His168, His172, and His173. Residues 229 to 249 (LQPMIITVILYAVLLALFGPK) form a helical membrane-spanning segment. Position 250 (Met250) is a topological domain, periplasmic. The chain crosses the membrane as a helical span at residues 251–270 (LVFLPIQMAFGWWQLTSANY). Topologically, residues 271-401 (IEHYGLLRQK…HSSSTSAVAS (131 aa)) are cytoplasmic. His312, His315, and His316 together coordinate Fe cation.

This sequence belongs to the fatty acid desaturase type 1 family. AlkB subfamily. Requires Fe(3+) as cofactor.

Its subcellular location is the cell inner membrane. It carries out the reaction octane + 2 reduced [rubredoxin] + O2 + 2 H(+) = 2 oxidized [rubredoxin] + octan-1-ol + H2O. The protein operates within hydrocarbon metabolism; alkane degradation. In terms of biological role, catalyzes the hydroxylation of n-alkanes and fatty acids in the presence of a NADH-rubredoxin reductase and rubredoxin. The protein is Alkane 1-monooxygenase (alkB) of Ectopseudomonas oleovorans (Pseudomonas oleovorans).